A 73-amino-acid polypeptide reads, in one-letter code: Large ribosomal subunit protein bL31 (73 aa).

Zn(2+)-binding residues include cysteine 16, cysteine 18, cysteine 37, and cysteine 40.

This sequence belongs to the bacterial ribosomal protein bL31 family. Type A subfamily. As to quaternary structure, part of the 50S ribosomal subunit. Requires Zn(2+) as cofactor.

In terms of biological role, binds the 23S rRNA. The protein is Large ribosomal subunit protein bL31 of Marinobacter nauticus (strain ATCC 700491 / DSM 11845 / VT8) (Marinobacter aquaeolei).